Here is a 217-residue protein sequence, read N- to C-terminus: 3,4-dihydroxy-2-butanone 4-phosphate synthase (217 aa).

D-ribulose 5-phosphate is bound by residues 37–38 (RE), Asp-42, 150–154 (RRGHT), and Glu-174. A Mg(2+)-binding site is contributed by Glu-38. Residue His-153 participates in Mg(2+) binding.

The protein belongs to the DHBP synthase family. As to quaternary structure, homodimer. Mg(2+) is required as a cofactor. It depends on Mn(2+) as a cofactor.

It carries out the reaction D-ribulose 5-phosphate = (2S)-2-hydroxy-3-oxobutyl phosphate + formate + H(+). The protein operates within cofactor biosynthesis; riboflavin biosynthesis; 2-hydroxy-3-oxobutyl phosphate from D-ribulose 5-phosphate: step 1/1. In terms of biological role, catalyzes the conversion of D-ribulose 5-phosphate to formate and 3,4-dihydroxy-2-butanone 4-phosphate. This is 3,4-dihydroxy-2-butanone 4-phosphate synthase from Tolumonas auensis (strain DSM 9187 / NBRC 110442 / TA 4).